The following is a 372-amino-acid chain: Homoserine O-acetyltransferase (372 aa).

In terms of domain architecture, AB hydrolase-1 spans 43–353; it reads NAILIFHALT…DKGHDSFLLK (311 aa). S148 acts as the Nucleophile in catalysis. R218 provides a ligand contact to substrate. Active-site residues include D314 and H347. Residue D348 coordinates substrate.

The protein belongs to the AB hydrolase superfamily. MetX family. In terms of assembly, homodimer.

It is found in the cytoplasm. The catalysed reaction is L-homoserine + acetyl-CoA = O-acetyl-L-homoserine + CoA. Its pathway is amino-acid biosynthesis; L-methionine biosynthesis via de novo pathway; O-acetyl-L-homoserine from L-homoserine: step 1/1. Its function is as follows. Transfers an acetyl group from acetyl-CoA to L-homoserine, forming acetyl-L-homoserine. In Pelagibacter ubique (strain HTCC1062), this protein is Homoserine O-acetyltransferase.